We begin with the raw amino-acid sequence, 176 residues long: MKASGTLREYKVVGRCLPTPKCHTPPLYRMRIFAPNHVVAKSRFWYFVSQLKKMKKSSGEIVYCGQVFEKSPLRVKNFGIWLRYDSRSGTHNMYREYRDLTTAGAVTQCYRDMGARHRARAHSIQIMKVEEIAASKCRRPAVKQFHDSKIKFPLPHRVLRRQHKPRFTTKRPNTFF.

Residue lysine 11 forms a Glycyl lysine isopeptide (Lys-Gly) (interchain with G-Cter in SUMO2) linkage. The residue at position 63 (tyrosine 63) is a Phosphotyrosine. The residue at position 71 (serine 71) is a Phosphoserine. N6-succinyllysine is present on lysine 76. Position 123 is a phosphoserine (serine 123). Glycyl lysine isopeptide (Lys-Gly) (interchain with G-Cter in SUMO2) cross-links involve residues lysine 128 and lysine 170.

The protein belongs to the eukaryotic ribosomal protein eL20 family. As to quaternary structure, component of the large ribosomal subunit. Binds IPO9 with high affinity.

The protein localises to the cytoplasm. Functionally, component of the large ribosomal subunit. The ribosome is a large ribonucleoprotein complex responsible for the synthesis of proteins in the cell. This Bos taurus (Bovine) protein is Large ribosomal subunit protein eL20 (RPL18A).